Reading from the N-terminus, the 241-residue chain is Probable porphobilinogen deaminase (241 aa).

Belongs to the HMBS family.

It carries out the reaction 4 porphobilinogen + H2O = hydroxymethylbilane + 4 NH4(+). The protein operates within porphyrin-containing compound metabolism; protoporphyrin-IX biosynthesis; coproporphyrinogen-III from 5-aminolevulinate: step 2/4. Functionally, tetrapolymerization of the monopyrrole PBG into the hydroxymethylbilane pre-uroporphyrinogen in several discrete steps. This Chlamydia trachomatis serovar D (strain ATCC VR-885 / DSM 19411 / UW-3/Cx) protein is Probable porphobilinogen deaminase (hemC).